We begin with the raw amino-acid sequence, 658 residues long: UvrABC system protein B (658 aa).

Positions 25–416 (QFIHNGAQYS…QEHIAEQIIR (392 aa)) constitute a Helicase ATP-binding domain. Residue 38–45 (GVTGSGKT) coordinates ATP. The Beta-hairpin signature appears at 91-114 (HFDYYQPEAYIPRRDLFIEKDSSI). The Helicase C-terminal domain occupies 433-607 (AVLDLYDEIK…ELKIESSGLS (175 aa)). Positions 623-658 (ESIIKELNIKMHQAAKALEFEEAARLRDEIARIRTM) constitute a UVR domain.

The protein belongs to the UvrB family. In terms of assembly, forms a heterotetramer with UvrA during the search for lesions. Interacts with UvrC in an incision complex.

Its subcellular location is the cytoplasm. The UvrABC repair system catalyzes the recognition and processing of DNA lesions. A damage recognition complex composed of 2 UvrA and 2 UvrB subunits scans DNA for abnormalities. Upon binding of the UvrA(2)B(2) complex to a putative damaged site, the DNA wraps around one UvrB monomer. DNA wrap is dependent on ATP binding by UvrB and probably causes local melting of the DNA helix, facilitating insertion of UvrB beta-hairpin between the DNA strands. Then UvrB probes one DNA strand for the presence of a lesion. If a lesion is found the UvrA subunits dissociate and the UvrB-DNA preincision complex is formed. This complex is subsequently bound by UvrC and the second UvrB is released. If no lesion is found, the DNA wraps around the other UvrB subunit that will check the other stand for damage. The chain is UvrABC system protein B from Helicobacter hepaticus (strain ATCC 51449 / 3B1).